The following is an 81-amino-acid chain: Large ribosomal subunit protein bL31B (81 aa).

Belongs to the bacterial ribosomal protein bL31 family. Type B subfamily. In terms of assembly, part of the 50S ribosomal subunit.

This Lactobacillus acidophilus (strain ATCC 700396 / NCK56 / N2 / NCFM) protein is Large ribosomal subunit protein bL31B.